A 187-amino-acid polypeptide reads, in one-letter code: UPF0301 protein CKO_04323 (187 aa).

The protein belongs to the UPF0301 (AlgH) family.

The sequence is that of UPF0301 protein CKO_04323 from Citrobacter koseri (strain ATCC BAA-895 / CDC 4225-83 / SGSC4696).